We begin with the raw amino-acid sequence, 35 residues long: Photosystem II reaction center protein Psb30 (35 aa).

The helical transmembrane segment at valine 7 to leucine 27 threads the bilayer.

This sequence belongs to the Psb30/Ycf12 family. As to quaternary structure, PSII is composed of 1 copy each of membrane proteins PsbA, PsbB, PsbC, PsbD, PsbE, PsbF, PsbH, PsbI, PsbJ, PsbK, PsbL, PsbM, PsbT, PsbX, PsbY, PsbZ, Psb30/Ycf12, peripheral proteins PsbO, CyanoQ (PsbQ), PsbU, PsbV and a large number of cofactors. It forms dimeric complexes.

It is found in the cellular thylakoid membrane. Functionally, a core subunit of photosystem II (PSII), probably helps stabilize the reaction center. This is Photosystem II reaction center protein Psb30 from Synechococcus sp. (strain JA-2-3B'a(2-13)) (Cyanobacteria bacterium Yellowstone B-Prime).